The primary structure comprises 113 residues: Putative pterin-4-alpha-carbinolamine dehydratase (113 aa).

This sequence belongs to the pterin-4-alpha-carbinolamine dehydratase family.

It catalyses the reaction (4aS,6R)-4a-hydroxy-L-erythro-5,6,7,8-tetrahydrobiopterin = (6R)-L-erythro-6,7-dihydrobiopterin + H2O. The protein is Putative pterin-4-alpha-carbinolamine dehydratase of Pelodictyon phaeoclathratiforme (strain DSM 5477 / BU-1).